We begin with the raw amino-acid sequence, 299 residues long: Fluorinase (299 aa).

S-adenosyl-L-methionine-binding positions include Asp-15, 20–22, Tyr-76, Ser-157, Asp-210, Asn-215, 269–270, and 277–279; these read DDS, SR, and RNA.

This sequence belongs to the SAM hydrolase / SAM-dependent halogenase family.

It carries out the reaction fluoride + S-adenosyl-L-methionine = 5'-deoxy-5'-fluoroadenosine + L-methionine. Its activity is regulated as follows. Activity is not severely affected by most metal ions (Mg(2+), Mn(2+), Co(2+) and Fe(2+)), but both Cu(2+) and Zn(2+) are strong inhibitors. Functionally, catalyzes the formation of a C-F bond by combining S-adenosyl-L-methionine (SAM) and fluoride to generate 5'-fluoro-5'-deoxyadenosine (5'-FDA) and L-methionine. The polypeptide is Fluorinase (Actinopolyspora mzabensis).